The primary structure comprises 111 residues: Cell division protein FtsB (111 aa).

Topologically, residues 1 to 3 (MRL) are cytoplasmic. The chain crosses the membrane as a helical span at residues 4 to 21 (ITLFLLLLLLAIQYPLWL). Residues 22–111 (GKGGWLRVWD…PAALQPNHRH (90 aa)) are Periplasmic-facing. Positions 28 to 64 (RVWDMQKQVASQNQRNAELKQRNLKLEGEVKDLKEGT) form a coiled coil. Residues 90 to 111 (PAPKTSETPLPPPAALQPNHRH) are disordered.

This sequence belongs to the FtsB family. Part of a complex composed of FtsB, FtsL and FtsQ.

The protein localises to the cell inner membrane. Functionally, essential cell division protein. May link together the upstream cell division proteins, which are predominantly cytoplasmic, with the downstream cell division proteins, which are predominantly periplasmic. In Ralstonia nicotianae (strain ATCC BAA-1114 / GMI1000) (Ralstonia solanacearum), this protein is Cell division protein FtsB.